The following is a 716-amino-acid chain: Beta-galactosidase (716 aa).

Glu-389 serves as the catalytic Proton donor. Glu-462 (nucleophile) is an active-site residue.

It belongs to the glycosyl hydrolase 2 family. Homodimer.

The enzyme catalyses Hydrolysis of terminal non-reducing beta-D-galactose residues in beta-D-galactosides.. Its function is as follows. Displays beta-galactosidase activity with the artificial chromogenic substrate o-nitrophenyl-beta-D-galactopyranoside (ONPG). This chain is Beta-galactosidase, found in Thermoanaerobacterium thermosulfurigenes (Clostridium thermosulfurogenes).